The following is a 260-amino-acid chain: Acetylglutamate kinase (260 aa).

Residues 46–47 (GG), Arg68, and Asn160 each bind substrate.

This sequence belongs to the acetylglutamate kinase family. ArgB subfamily.

It localises to the cytoplasm. The enzyme catalyses N-acetyl-L-glutamate + ATP = N-acetyl-L-glutamyl 5-phosphate + ADP. It participates in amino-acid biosynthesis; L-arginine biosynthesis; N(2)-acetyl-L-ornithine from L-glutamate: step 2/4. In terms of biological role, catalyzes the ATP-dependent phosphorylation of N-acetyl-L-glutamate. This is Acetylglutamate kinase from Shewanella sp. (strain W3-18-1).